A 332-amino-acid chain; its full sequence is Heterogeneous nuclear ribonucleoprotein A/B (332 aa).

The interval 1–66 (MSEAGEEQPM…DQINASKNEE (66 aa)) is disordered. The segment covering 29–49 (GRGWTGAAAGAGGATAAPPSG) has biased composition (low complexity). RRM domains lie at 69 to 154 (GKMF…PVKK) and 153 to 233 (KKIF…QPKE). Ser-81 is subject to Phosphoserine. Residues Lys-130 and Lys-203 each participate in a glycyl lysine isopeptide (Lys-Gly) (interchain with G-Cter in SUMO2) cross-link. At Lys-215 the chain carries N6-acetyllysine. Residues 235-268 (YQQQQYGSGGRGNRNRGNRGSGGGGGGGGQSQSW) are disordered. Ser-242 is subject to Phosphoserine. Arg-245 carries the post-translational modification Dimethylated arginine; alternate. An Omega-N-methylarginine; alternate modification is found at Arg-245. Arg-250, Gly-251, Arg-253, and Gly-254 each carry omega-N-methylarginine. Residues 253–264 (RGSGGGGGGGGQ) are compositionally biased toward gly residues. A phosphoserine mark is found at Ser-255 and Gly-256. N6-acetyllysine is present on residues Gly-271, Tyr-272, and Lys-318. Residues 311–332 (QGSTNYGKSQRRGGHQNNYKPY) form a disordered region. Arg-322 is modified (dimethylated arginine; alternate). Omega-N-methylarginine; alternate is present on Arg-322. Arg-322 carries the asymmetric dimethylarginine; alternate modification.

In terms of assembly, identified in a IGF2BP1-dependent mRNP granule complex containing untranslated mRNAs. Interacts with APOBEC1. In terms of processing, dimethylation at Arg-322 is probably asymmetric. As to expression, ubiquitous.

The protein localises to the nucleus. The protein resides in the cytoplasm. Functionally, binds single-stranded RNA. Has a high affinity for G-rich and U-rich regions of hnRNA. Also binds to APOB mRNA transcripts around the RNA editing site. The chain is Heterogeneous nuclear ribonucleoprotein A/B (HNRNPAB) from Homo sapiens (Human).